A 115-amino-acid polypeptide reads, in one-letter code: Protein V2 (115 aa).

The protein belongs to the geminiviridae protein AV2/V2 family. Interacts with host SGS3.

It localises to the host cytoplasm. Its subcellular location is the host perinuclear region. In terms of biological role, through its interaction with host SGS3, acts as a suppressor of RNA-mediated gene silencing, also known as post-transcriptional gene silencing (PTGS), a mechanism of plant viral defense that limits the accumulation of viral RNAs. This is Protein V2 from Cynanchum acutum (Little mallow).